Here is a 729-residue protein sequence, read N- to C-terminus: MAEKENVHPQVISSFPTPSKALKLSEKSSLKDVQTDNAAVPLVVDETSYPEPTCEFYGGLLGPQLPEAERFVLDPALVEEYRHKKPPFGFNGLGEVVYLRTYAREKDNGQSEVWLDTVQRVVTGTFEVLQHHVVNKLHCHWDAQKAKERSEDMFRRIFEMKFLPPGRGLWAMGSPICRKKGFAAALNNCAFVSTATLEKDRVGPFLFLMDASMLGVGVGFDNAGAGSFTVPGPDDTQPTYKFMIPDKREGWVESLKRLLKAHFCHTADVEFDYSKIREMGTKLKTFGGTSSGPGPLINLHKSIRKILVGEKGKPISVTCITDIMNLIGVCTVAGNIRRSAEIAFGEADCKEFLDLKSYETNPHRVEYGWASNNSIFAKVGMDYSDACERVRTNGEPGFAWLSNMQAFSRMNGKPDYRDQRVLGGNPCLEQSLESMELCCLVETFPDKHETLEDFKRTLYSALLYAKTVTLLPLHWRESNEIMLRNRRIGCSVSGIAQFITNRGLHELKTWLEEGYDILHQYDCQISEWLCIRQSIKLTSVKPSGTISLVAGATPGVHYPESCYYTRRLRMARDSPLLERLIKAGYHVEPCCVAPDVTAIVEFPVAAGNSIRTTRDITMWEQLSLAAFMQRYWADNQVSATITFDPETEGLHLNQALQYFQYQLKGISFLPRYPMGAFKQMPYEAITKEQYEEAIRKVKEDVSLSSANAIAETVEENQQTFCDNDRCIKL.

An intrachain disulfide couples C189 to C438. Residues C427 and E429 contribute to the active site.

It belongs to the class II ribonucleoside-triphosphate reductase family. Monomer. The cofactor is adenosylcob(III)alamin.

It catalyses the reaction a 2'-deoxyribonucleoside 5'-triphosphate + [thioredoxin]-disulfide + H2O = a ribonucleoside 5'-triphosphate + [thioredoxin]-dithiol. The sequence is that of Adenosylcobalamin-dependent ribonucleoside-triphosphate reductase (rnr) from Euglena gracilis.